Consider the following 369-residue polypeptide: F-box protein UCC1 (369 aa).

Residues 8-45 (LMDLPLEIHLSLLEYVPNELRAVNKYFYVLHNHSYKEK) enclose the F-box domain.

In terms of assembly, component of the SCF(UCC1) E3 ubiquitin-protein ligase complex composed of CDC53, SKP1, RBX1 and UCC1. Interacts with CIT2. In terms of processing, monoubiquitinated by UBC4.

The protein operates within protein modification; protein ubiquitination. Functionally, substrate recognition component of the SKP1-CUL1-F-box protein E3 ubiquitin-protein ligase complex SCF(UCC1) which mediates the ubiquitination and subsequent proteasomal degradation of target proteins. The SCF(UCC1) complex acts as a metabolic switch for the glyoxylate cycle and regulates the level of CIT2 protein to maintain citrate homeostasis. The chain is F-box protein UCC1 (UCC1) from Saccharomyces cerevisiae (strain ATCC 204508 / S288c) (Baker's yeast).